A 366-amino-acid chain; its full sequence is Aminomethyltransferase (366 aa).

Belongs to the GcvT family. As to quaternary structure, the glycine cleavage system is composed of four proteins: P, T, L and H.

It catalyses the reaction N(6)-[(R)-S(8)-aminomethyldihydrolipoyl]-L-lysyl-[protein] + (6S)-5,6,7,8-tetrahydrofolate = N(6)-[(R)-dihydrolipoyl]-L-lysyl-[protein] + (6R)-5,10-methylene-5,6,7,8-tetrahydrofolate + NH4(+). Its function is as follows. The glycine cleavage system catalyzes the degradation of glycine. The protein is Aminomethyltransferase of Thermosynechococcus vestitus (strain NIES-2133 / IAM M-273 / BP-1).